A 238-amino-acid polypeptide reads, in one-letter code: Putative pectate lyase X (238 aa).

An N-terminal signal peptide occupies residues 1-22; the sequence is MKYLLPTAAAGLLLLAAQPAMA. Aspartate 153, glutamate 188, and aspartate 192 together coordinate Ca(2+).

Belongs to the polysaccharide lyase 1 family. Ca(2+) is required as a cofactor.

The catalysed reaction is Eliminative cleavage of (1-&gt;4)-alpha-D-galacturonan to give oligosaccharides with 4-deoxy-alpha-D-galact-4-enuronosyl groups at their non-reducing ends.. It functions in the pathway glycan metabolism; pectin degradation; 2-dehydro-3-deoxy-D-gluconate from pectin: step 2/5. Functionally, involved in maceration and soft-rotting of plant tissue. This Pectobacterium carotovorum (Erwinia carotovora) protein is Putative pectate lyase X (PEL X).